The sequence spans 56 residues: Male-specific sperm protein Mst87F (56 aa).

Belongs to the MST(3)CGP family. In terms of tissue distribution, testis.

This is Male-specific sperm protein Mst87F (Mst87F) from Drosophila melanogaster (Fruit fly).